We begin with the raw amino-acid sequence, 178 residues long: Bifunctional protein PyrR (178 aa).

The short motif at 99-111 is the PRPP-binding element; sequence VILVDDVLFTGRT.

Belongs to the purine/pyrimidine phosphoribosyltransferase family. PyrR subfamily. In terms of assembly, homodimer and homohexamer; in equilibrium.

It catalyses the reaction UMP + diphosphate = 5-phospho-alpha-D-ribose 1-diphosphate + uracil. In terms of biological role, regulates transcriptional attenuation of the pyrimidine nucleotide (pyr) operon by binding in a uridine-dependent manner to specific sites on pyr mRNA. This disrupts an antiterminator hairpin in the RNA and favors formation of a downstream transcription terminator, leading to a reduced expression of downstream genes. Functionally, also displays a weak uracil phosphoribosyltransferase activity which is not physiologically significant. The sequence is that of Bifunctional protein PyrR from Ligilactobacillus salivarius (strain UCC118) (Lactobacillus salivarius).